A 150-amino-acid polypeptide reads, in one-letter code: Transcriptional repressor NrdR (150 aa).

A zinc finger lies at 3–34 (CPFCNFEESKVVDSRATDDNTTIRRRRECLNC). The region spanning 49–139 (VLVVKKDLAR…VYRQFKDINT (91 aa)) is the ATP-cone domain.

The protein belongs to the NrdR family. The cofactor is Zn(2+).

In terms of biological role, negatively regulates transcription of bacterial ribonucleotide reductase nrd genes and operons by binding to NrdR-boxes. The sequence is that of Transcriptional repressor NrdR from Clostridium botulinum (strain Eklund 17B / Type B).